Consider the following 422-residue polypeptide: Charged multivesicular body protein 7 (422 aa).

Residues 234 to 304 are a coiled coil; sequence KLLSERLQSA…ERISAAETDR (71 aa). A disordered region spans residues 394–422; that stretch reads RPTEWKMDQAAHSPADGSFLRSVPEPMLQ.

This sequence belongs to the SNF7 family.

Its subcellular location is the cytoplasm. The protein resides in the nucleus envelope. Functionally, ESCRT-III-like protein required to recruit the ESCRT-III complex to the nuclear envelope during late anaphase. Together with SPAST, the ESCRT-III complex promotes nuclear envelope sealing and mitotic spindle disassembly during late anaphase. Plays a role in the endosomal sorting pathway. The protein is Charged multivesicular body protein 7 (chmp7) of Xenopus laevis (African clawed frog).